The chain runs to 497 residues: RNA-splicing ligase RtcB homolog (497 aa).

The Mn(2+) site is built by aspartate 111, cysteine 114, histidine 219, histidine 251, and histidine 345. 218–222 (NHYAE) provides a ligand contact to GMP. Residues 345–346 (HN), 394–397 (GGTM), serine 401, 420–423 (HGAG), and lysine 496 each bind GMP. Histidine 420 (GMP-histidine intermediate) is an active-site residue.

The protein belongs to the RtcB family. As to quaternary structure, catalytic component of the tRNA-splicing ligase complex. The cofactor is Mn(2+).

The enzyme catalyses a 3'-end 3'-phospho-ribonucleotide-RNA + a 5'-end dephospho-ribonucleoside-RNA + GTP = a ribonucleotidyl-ribonucleotide-RNA + GMP + diphosphate. It catalyses the reaction a 3'-end 2',3'-cyclophospho-ribonucleotide-RNA + a 5'-end dephospho-ribonucleoside-RNA + GTP + H2O = a ribonucleotidyl-ribonucleotide-RNA + GMP + diphosphate + H(+). Functionally, catalytic subunit of the tRNA-splicing ligase complex that acts by directly joining spliced tRNA halves to mature-sized tRNAs by incorporating the precursor-derived splice junction phosphate into the mature tRNA as a canonical 3',5'-phosphodiester. May act as an RNA ligase with broad substrate specificity, and may function toward other RNAs. The chain is RNA-splicing ligase RtcB homolog from Monosiga brevicollis (Choanoflagellate).